Reading from the N-terminus, the 146-residue chain is Hemoglobin subunit beta (146 aa).

Val-1 is modified (N-acetylvaline). The 145-residue stretch at His-2–His-146 folds into the Globin domain. A Phosphothreonine modification is found at Thr-12. A Phosphoserine modification is found at Ser-44. Lys-59 bears the N6-acetyllysine mark. His-63 contacts heme b. Lys-82 is subject to N6-acetyllysine. Residue His-92 coordinates heme b. Cys-93 is modified (S-nitrosocysteine). Residue Lys-144 is modified to N6-acetyllysine.

The protein belongs to the globin family. Heterotetramer of two alpha chains and two beta chains. In terms of tissue distribution, red blood cells.

Its function is as follows. Involved in oxygen transport from the lung to the various peripheral tissues. The sequence is that of Hemoglobin subunit beta (HBB) from Loris tardigradus (Slender loris).